The sequence spans 385 residues: Pre-mRNA-splicing factor slt-11 (385 aa).

The segment at 157–233 is disordered; sequence RKGREVDEEG…PPGPKDWLPP (77 aa). Residues 171–187 are compositionally biased toward low complexity; it reads GSSSGAGRATGGNPAVG. Residues 239–312 enclose the RRM domain; sequence MSLFVTGIED…CPLRVRWSVP (74 aa). The span at 320-331 shows a compositional bias: basic and acidic residues; it reads KEQRSEMLRDGR. The segment at 320–370 is disordered; sequence KEQRSEMLRDGRSAFGSGQKTGGQKAIGGQNAQGGASGAQKDDASNLTIAA.

The protein belongs to the SLT11 family. Associated with the spliceosome.

It localises to the nucleus. In terms of biological role, involved in pre-mRNA splicing. Facilitates the cooperative formation of U2/U6 helix II in association with stem II in the spliceosome. Binds to RNA. The protein is Pre-mRNA-splicing factor slt-11 (slt-11) of Neurospora crassa (strain ATCC 24698 / 74-OR23-1A / CBS 708.71 / DSM 1257 / FGSC 987).